Here is a 370-residue protein sequence, read N- to C-terminus: 3-isopropylmalate dehydrogenase (370 aa).

Residue 77 to 90 (GPKWDAVPYEVRPE) coordinates NAD(+). Substrate is bound by residues Arg97, Arg107, Arg135, and Asp226. Mg(2+) is bound by residues Asp226, Asp250, and Asp254. 290 to 302 (GSAPDIAGTGVAN) contacts NAD(+).

Belongs to the isocitrate and isopropylmalate dehydrogenases family. LeuB type 1 subfamily. In terms of assembly, homodimer. The cofactor is Mg(2+). It depends on Mn(2+) as a cofactor.

The protein resides in the cytoplasm. The catalysed reaction is (2R,3S)-3-isopropylmalate + NAD(+) = 4-methyl-2-oxopentanoate + CO2 + NADH. Its pathway is amino-acid biosynthesis; L-leucine biosynthesis; L-leucine from 3-methyl-2-oxobutanoate: step 3/4. In terms of biological role, catalyzes the oxidation of 3-carboxy-2-hydroxy-4-methylpentanoate (3-isopropylmalate) to 3-carboxy-4-methyl-2-oxopentanoate. The product decarboxylates to 4-methyl-2 oxopentanoate. The polypeptide is 3-isopropylmalate dehydrogenase (Rhizobium meliloti (strain 1021) (Ensifer meliloti)).